The chain runs to 289 residues: Complement C1q tumor necrosis factor-related protein 7 (289 aa).

The first 16 residues, 1 to 16 (MIVLLYVTSLAICASG), serve as a signal peptide directing secretion. The interval 36 to 134 (IPGLPGPPGP…GDRGDQGDPG (99 aa)) is disordered. A Collagen-like domain is found at 38 to 139 (GLPGPPGPPG…QGDPGLPGVC (102 aa)). Over residues 48–61 (ANGSPGPHGRIGLP) the composition is skewed to low complexity. The segment covering 63–76 (RDGRDGRKGEKGEK) has biased composition (basic and acidic residues). The span at 78 to 91 (TAGLKGKTGPLGLA) shows a compositional bias: low complexity. Residues 93-102 (EKGDQGETGK) show a composition bias toward basic and acidic residues. The C1q domain occupies 143–279 (SIVLKSAFSV…GFLLYVDTDY (137 aa)).

The protein resides in the secreted. In Mus musculus (Mouse), this protein is Complement C1q tumor necrosis factor-related protein 7 (C1qtnf7).